A 31-amino-acid chain; its full sequence is Cytochrome b6-f complex subunit 6 (31 aa).

A helical transmembrane segment spans residues 4–26 (ITSYFGFLLAASTITPALLIGLS).

Belongs to the PetL family. The 4 large subunits of the cytochrome b6-f complex are cytochrome b6, subunit IV (17 kDa polypeptide, PetD), cytochrome f and the Rieske protein, while the 4 small subunits are PetG, PetL, PetM and PetN. The complex functions as a dimer.

It localises to the plastid. The protein resides in the chloroplast thylakoid membrane. In terms of biological role, component of the cytochrome b6-f complex, which mediates electron transfer between photosystem II (PSII) and photosystem I (PSI), cyclic electron flow around PSI, and state transitions. PetL is important for photoautotrophic growth as well as for electron transfer efficiency and stability of the cytochrome b6-f complex. This is Cytochrome b6-f complex subunit 6 from Illicium oligandrum (Star anise).